The sequence spans 339 residues: Trace amine-associated receptor 1 (339 aa).

Over 1–25 (MMPFCHNIINISCVKNNWSNDVRAS) the chain is Extracellular. 3 cysteine pairs are disulfide-bonded: Cys-5-Cys-178, Cys-13-Cys-88, and Cys-96-Cys-182. 2 N-linked (GlcNAc...) asparagine glycosylation sites follow: Asn-10 and Asn-17. A helical transmembrane segment spans residues 26 to 46 (LYSLMVLIILTTLVGNLIVIV). Residues 47–59 (SISHFKELHTPTN) are Cytoplasmic-facing. A helical transmembrane segment spans residues 60 to 80 (WLIHSMATVDFLPGCLVMPYS). The Extracellular segment spans residues 81-98 (MVRSAEHCWYFGEVFCKI). Residues 99–119 (HTSTDIMLSSASIFHLSFISI) traverse the membrane as a helical segment. Asp-103 provides a ligand contact to 2-phenylethylamine. Residues 120–136 (DRYYAVCDPLRYKAKIN) are Cytoplasmic-facing. The helical transmembrane segment at 137–157 (ILVICVMIFISWSVPAVFAFG) threads the bilayer. At 158–188 (MIFLELNFKGAEEIYYKHVHCRGGCSVFFSK) the chain is on the extracellular side. Residues 189–209 (ISGVLTFMTSFYIPGSIMLCV) traverse the membrane as a helical segment. Residues 210-252 (YYRIYLIAKEQARLINDANQKLQIGLEMKNGISQSKERKAVKT) are Cytoplasmic-facing. A helical membrane pass occupies residues 253–273 (LGIVMGVFLICWCPFFICTVM). Over 274 to 287 (DPFLHYIIPPTLND) the chain is Extracellular. The helical transmembrane segment at 288 to 308 (VLIWFGYLNSTFNPMVYAFFY) threads the bilayer. Topologically, residues 309-339 (PWFRKALKMMLFGKIFQKDSSRCKLFLELSS) are cytoplasmic.

It belongs to the G-protein coupled receptor 1 family.

Its subcellular location is the endomembrane system. The protein localises to the endoplasmic reticulum membrane. It localises to the cell membrane. Its function is as follows. Intracellular G-protein coupled receptor for trace amines, which recognizes endogenous amine-containing metabolites such as beta-phenylethylamine (beta-PEA), 3-iodothyronamine (T1AM), isoamylamine (IAA), cadaverine (CAD), cyclohexylamine (CHA), p-tyramine (p-TYR), trimethylamine (TMA), octopamine and tryptamine. Also functions as a receptor for various drugs and psychoactive substances, such as amphetamine and methamphetamine. Unresponsive to classical biogenic amines, such as epinephrine and histamine and only partially activated by dopamine and serotonin. Expressed in both the central and peripheral nervous system: TAAR1 activation regulates the activity of several neurotransmitter signaling pathways by (1) decreasing the basal firing rates of the neurons involved and by (2) lowering the sensitivity of receptors to neurotransmitters. Ligand binding causes a conformation change that triggers signaling via guanine nucleotide-binding proteins (G proteins) and modulates the activity of downstream effectors. TAAR1 is coupled with different G(i)/G(o)-, G(s)- or G(q)/G(11) classes of G alpha proteins depending on the ligand. CAD-binding is coupled to G(i)/G(o) G alpha proteins and mediates inhibition of adenylate cyclase activity. T1AM- or beta-PEA-binding is coupled to G(s) G alpha proteins and mediates activation of adenylate cyclase activity. CHA- or IAA-binding is coupled to G(q)/G(11) G alpha proteins and activates phospholipase C-beta, releasing diacylglycerol (DAG) and inositol 1,4,5-trisphosphate (IP3) second messengers. TMA-binding is coupled with all three G(i)/G(o)-, G(s)- or G(q)/G(11) G alpha protein subtypes. The protein is Trace amine-associated receptor 1 (TAAR1) of Pan troglodytes (Chimpanzee).